A 141-amino-acid polypeptide reads, in one-letter code: Putative pre-16S rRNA nuclease (141 aa).

The protein belongs to the YqgF nuclease family.

The protein localises to the cytoplasm. Functionally, could be a nuclease involved in processing of the 5'-end of pre-16S rRNA. This chain is Putative pre-16S rRNA nuclease, found in Cupriavidus pinatubonensis (strain JMP 134 / LMG 1197) (Cupriavidus necator (strain JMP 134)).